A 333-amino-acid polypeptide reads, in one-letter code: Phosphate acyltransferase (333 aa).

Belongs to the PlsX family. In terms of assembly, homodimer. Probably interacts with PlsY.

The protein localises to the cytoplasm. The enzyme catalyses a fatty acyl-[ACP] + phosphate = an acyl phosphate + holo-[ACP]. It functions in the pathway lipid metabolism; phospholipid metabolism. Catalyzes the reversible formation of acyl-phosphate (acyl-PO(4)) from acyl-[acyl-carrier-protein] (acyl-ACP). This enzyme utilizes acyl-ACP as fatty acyl donor, but not acyl-CoA. The polypeptide is Phosphate acyltransferase (Helicobacter hepaticus (strain ATCC 51449 / 3B1)).